We begin with the raw amino-acid sequence, 287 residues long: Acetyl-coenzyme A carboxylase carboxyl transferase subunit beta (287 aa).

The 260-residue stretch at 28–287 (LWKKCPKCEN…ILSLLTNKVA (260 aa)) folds into the CoA carboxyltransferase N-terminal domain. Zn(2+) contacts are provided by Cys-32, Cys-35, Cys-51, and Cys-54. Residues 32–54 (CPKCENVLYRPELEKNLDVCPKC) form a C4-type zinc finger.

The protein belongs to the AccD/PCCB family. In terms of assembly, acetyl-CoA carboxylase is a heterohexamer composed of biotin carboxyl carrier protein (AccB), biotin carboxylase (AccC) and two subunits each of ACCase subunit alpha (AccA) and ACCase subunit beta (AccD). Zn(2+) is required as a cofactor.

The protein resides in the cytoplasm. The catalysed reaction is N(6)-carboxybiotinyl-L-lysyl-[protein] + acetyl-CoA = N(6)-biotinyl-L-lysyl-[protein] + malonyl-CoA. Its pathway is lipid metabolism; malonyl-CoA biosynthesis; malonyl-CoA from acetyl-CoA: step 1/1. In terms of biological role, component of the acetyl coenzyme A carboxylase (ACC) complex. Biotin carboxylase (BC) catalyzes the carboxylation of biotin on its carrier protein (BCCP) and then the CO(2) group is transferred by the transcarboxylase to acetyl-CoA to form malonyl-CoA. The polypeptide is Acetyl-coenzyme A carboxylase carboxyl transferase subunit beta (Marinomonas sp. (strain MWYL1)).